The sequence spans 86 residues: U-actitoxin-Avd10a (86 aa).

A signal peptide spans M1–A20. The propeptide occupies K21 to A42. In terms of domain architecture, ShKT spans C51–C86. Disulfide bonds link C51–C86, C60–C79, and C69–C83.

This sequence belongs to the sea anemone type 1 potassium channel toxin family. Type 1b subfamily.

It localises to the secreted. The protein resides in the nematocyst. Functionally, inhibits voltage-gated potassium channels (Kv1/KCNA). The sequence is that of U-actitoxin-Avd10a from Anemonia viridis (Snakelocks anemone).